The primary structure comprises 831 residues: Periplasmic nitrate reductase (831 aa).

A signal peptide (tat-type signal) is located at residues 1-29; it reads MKVSRRDFIKQTAIAATASVAGIPLGTEA. One can recognise a 4Fe-4S Mo/W bis-MGD-type domain in the interval 41–97; it reads LKWSKAPCRFCGTGCGVTVAVRDNKVVATQGDPQCEVNKGLNCVKGYFLSKIMYGQD. [4Fe-4S] cluster contacts are provided by C48, C51, C55, and C83. Residues K85, Q152, N177, C181, 214–221, 245–249, 264–266, M375, Q379, N485, 511–512, K534, D561, and 721–730 contribute to the Mo-bis(molybdopterin guanine dinucleotide) site; these read WGSNMAEM, STFTH, QTD, SD, and TGRVLEHWHS. W797 is a binding site for substrate. Residues N805 and K822 each coordinate Mo-bis(molybdopterin guanine dinucleotide).

Belongs to the prokaryotic molybdopterin-containing oxidoreductase family. NasA/NapA/NarB subfamily. Component of the periplasmic nitrate reductase NapAB complex composed of NapA and NapB. [4Fe-4S] cluster serves as cofactor. Mo-bis(molybdopterin guanine dinucleotide) is required as a cofactor. In terms of processing, predicted to be exported by the Tat system. The position of the signal peptide cleavage has not been experimentally proven.

Its subcellular location is the periplasm. The catalysed reaction is 2 Fe(II)-[cytochrome] + nitrate + 2 H(+) = 2 Fe(III)-[cytochrome] + nitrite + H2O. Its function is as follows. Catalytic subunit of the periplasmic nitrate reductase complex NapAB. Receives electrons from NapB and catalyzes the reduction of nitrate to nitrite. This is Periplasmic nitrate reductase from Cupriavidus pinatubonensis (strain JMP 134 / LMG 1197) (Cupriavidus necator (strain JMP 134)).